The following is a 452-amino-acid chain: GPI mannosyltransferase 2 (452 aa).

The Cytoplasmic segment spans residues 1–7 (MMEKVTK). A helical transmembrane segment spans residues 8–28 (LALTSRVMVLVVQLLANFATP). Residues 29–113 (DHKPDVFRMP…HLGIPLSRDA (85 aa)) are Lumenal-facing. The chain crosses the membrane as a helical span at residues 114 to 134 (LILLVAVALNVLIFCKTANVL). Topologically, residues 135 to 161 (YKLTQRMFNDHNKSWNAALIFCFNPAS) are cytoplasmic. Residues 162 to 182 (IFFSAAYSETFFAFASFSLML) traverse the membrane as a helical segment. Residues 183 to 209 (ECMRSEKDFRTFRLGAALTGCFVCRSN) lie on the Lumenal side of the membrane. The chain crosses the membrane as a helical span at residues 210–230 (GLLTLGFPLYFLARHILLSTG). The Cytoplasmic portion of the chain corresponds to 231-238 (SVQRCWQL). A helical membrane pass occupies residues 239-259 (FKMGLAMLVALGILHTYYFYI). Residues 260–284 (YRLYCLPDVKVQHAQHVVDYAKERS) lie on the Lumenal side of the membrane. The chain crosses the membrane as a helical span at residues 285-305 (FLISGQASVGSPWCGYTLPFP). Residues 306–327 (YTYVQSHYWDVGFLRYYKWKQL) lie on the Cytoplasmic side of the membrane. The helical transmembrane segment at 328-348 (PNFLLALPMLLFMHWHCYDYI) threads the bilayer. Residues 349 to 370 (RKLVANTWSKISPSEYQGILKE) lie on the Lumenal side of the membrane. The helical transmembrane segment at 371-391 (HISFPFVLHAAVLTLVCTLYV) threads the bilayer. Topologically, residues 392–398 (HIQVSTR) are cytoplasmic. A helical membrane pass occupies residues 399 to 419 (LLASATPVFYWFAADYMPNTF). At 420 to 426 (QLSFRSK) the chain is on the lumenal side. A helical membrane pass occupies residues 427 to 447 (AGVLFIWCLTYSLVGTVLFSN). Residues 448–452 (NYPWT) lie on the Cytoplasmic side of the membrane.

The protein belongs to the PIGV family.

Its subcellular location is the endoplasmic reticulum membrane. The protein operates within glycolipid biosynthesis; glycosylphosphatidylinositol-anchor biosynthesis. Mannosyltransferase involved in glycosylphosphatidylinositol-anchor biosynthesis. Transfers the second mannose to the glycosylphosphatidylinositol during GPI precursor assembly. Required for the GPI-mediated endoplasmic reticulum exit and proper targeting to the cell surface of chp. Required for GPI-mediated membrane attachment of chp, qsm and Cont. Essential for microvillar stability in the rhabdomere. This Drosophila pseudoobscura pseudoobscura (Fruit fly) protein is GPI mannosyltransferase 2.